We begin with the raw amino-acid sequence, 164 residues long: V-type proton ATPase 16 kDa proteolipid subunit (164 aa).

The Lumenal portion of the chain corresponds to 1–10 (MSDLCPPTAP). A helical transmembrane segment spans residues 11–31 (FFGFMGAAVALIFANLGAAYG). At 32-53 (TAKSGVGVSSMGVMKPDLVMKS) the chain is on the cytoplasmic side. Residues 54–74 (IIPVVMAGVLGIYGLIIAVII) traverse the membrane as a helical segment. The Lumenal segment spans residues 75–96 (GNGVKGPEGGKPQYSSFTGFAH). A helical membrane pass occupies residues 97 to 118 (LAAGLACGLSGMAAGIAIGIVG). Over 119–130 (DAGVRASAQQAK) the chain is Cytoplasmic. Residues 131–155 (LYVGMVLILIFAEALGLYGLIVGLI) traverse the membrane as a helical segment. The Lumenal portion of the chain corresponds to 156-164 (LTSKEAPCS).

This sequence belongs to the V-ATPase proteolipid subunit family. V-ATPase is a heteromultimeric enzyme composed of a peripheral catalytic V1 complex (main components: subunits A, B, C, D, E, and F) attached to an integral membrane V0 proton pore complex (main component: the proteolipid protein; which is present as a hexamer that forms the proton-conducting pore).

The protein resides in the vacuole membrane. In terms of biological role, proton-conducting pore forming subunit of the membrane integral V0 complex of vacuolar ATPase. V-ATPase is responsible for acidifying a variety of intracellular compartments in eukaryotic cells. This Chrysotila carterae (Marine alga) protein is V-type proton ATPase 16 kDa proteolipid subunit (VAP).